The following is a 472-amino-acid chain: Arabinose-proton symporter (472 aa).

Residues 1-29 lie on the Cytoplasmic side of the membrane; that stretch reads MVTINTESALTPRSLRDTRRMNMFVSVAA. The chain crosses the membrane as a helical span at residues 30 to 50; the sequence is AVAGLLFGLDIGVIAGALPFI. Topologically, residues 51 to 63 are periplasmic; the sequence is TDHFVLTSRLQEW. A helical transmembrane segment spans residues 64 to 84; the sequence is VVSSMMLGAAIGALFNGWLSF. The Cytoplasmic segment spans residues 85–91; it reads RLGRKYS. The chain crosses the membrane as a helical span at residues 92–112; the sequence is LMAGAILFVLGSIGSAFATSV. Topologically, residues 113-114 are periplasmic; the sequence is EM. The helical transmembrane segment at 115–135 threads the bilayer; it reads LIAARVVLGIAVGIASYTAPL. At 136-154 the chain is on the cytoplasmic side; that stretch reads YLSEMASENVRGKMISMYQ. Residues 155 to 175 traverse the membrane as a helical segment; that stretch reads LMVTLGIVLAFLSDTAFSYSG. Topologically, residues 176 to 178 are periplasmic; sequence NWR. The chain crosses the membrane as a helical span at residues 179–199; that stretch reads AMLGVLALPAVLLIILVVFLP. Residues 200–257 lie on the Cytoplasmic side of the membrane; it reads NSPRWLAEKGRHIEAEEVLRMLRDTSEKAREELNEIRESLKLKQGGWALFKINRNVRR. A helical membrane pass occupies residues 258-278; it reads AVFLGMLLQAMQQFTGMNIIM. Over 279–297 the chain is Periplasmic; the sequence is YYAPRIFKMAGFTTTEQQM. Residues 298 to 318 traverse the membrane as a helical segment; sequence IATLVVGLTFMFATFIAVFTV. The Cytoplasmic portion of the chain corresponds to 319–325; sequence DKAGRKP. A helical membrane pass occupies residues 326 to 346; it reads ALKIGFSVMALGTLVLGYCLM. At 347–361 the chain is on the periplasmic side; it reads QFDNGTASSGLSWLS. A helical transmembrane segment spans residues 362 to 382; sequence VGMTMMCIAGYAMSAAPVVWI. Over 383–404 the chain is Cytoplasmic; sequence LCSEIQPLKCRDFGITCSTTTN. Transmembrane regions (helical) follow at residues 405 to 425 and 426 to 446; these read WVSN…IGAA and GTFW…FWLI. The Cytoplasmic segment spans residues 447–472; the sequence is PETKNVTLEHIERKLMAGEKLRNIGV.

This sequence belongs to the major facilitator superfamily. Sugar transporter (TC 2.A.1.1) family.

The protein localises to the cell inner membrane. The enzyme catalyses L-arabinose(in) + H(+)(in) = L-arabinose(out) + H(+)(out). Uptake of L-arabinose across the cytoplasmic membrane with the concomitant transport of protons into the cell (symport system). The protein is Arabinose-proton symporter (araE) of Escherichia coli O157:H7.